We begin with the raw amino-acid sequence, 481 residues long: 2-succinylbenzoate--CoA ligase (481 aa).

Belongs to the ATP-dependent AMP-binding enzyme family. MenE subfamily.

It carries out the reaction 2-succinylbenzoate + ATP + CoA = 2-succinylbenzoyl-CoA + AMP + diphosphate. Its pathway is quinol/quinone metabolism; 1,4-dihydroxy-2-naphthoate biosynthesis; 1,4-dihydroxy-2-naphthoate from chorismate: step 5/7. It participates in quinol/quinone metabolism; menaquinone biosynthesis. Converts 2-succinylbenzoate (OSB) to 2-succinylbenzoyl-CoA (OSB-CoA). This is 2-succinylbenzoate--CoA ligase from Bacillus cereus (strain ATCC 10987 / NRS 248).